We begin with the raw amino-acid sequence, 497 residues long: Tripartite motif-containing protein 5 (497 aa).

Alanine 2 carries the post-translational modification N-acetylalanine. An RING-type zinc finger spans residues 15–60; sequence CPICLELLTEPLSLPCGHSFCQACITANHRKSMLYKEGERSCPVCR. Residue serine 87 is modified to Phosphoserine. Residues 92 to 133 form a B box-type zinc finger; the sequence is LKVDHCARHGEKLLLFCQEDSKVICWLCERSQEHRGHHTFLM. Positions 97, 100, 119, and 125 each coordinate Zn(2+). Residues 137–225 are a coiled coil; that stretch reads AQEYHVKLQT…LTKSETEMVQ (89 aa). Residues 187–200 form a required for interaction with GABARAP and for autophagy region; it reads FEQLREILDWEESN. Residues 283-497 form the B30.2/SPRY domain; the sequence is LKGMLDMFRE…VPMTLCSPSS (215 aa).

Belongs to the TRIM/RBCC family. In terms of assembly, can form homodimers and homotrimers. In addition to lower-order dimerization, also exhibits a higher-order multimerization and both low- and high-order multimerizations are essential for its restriction activity. Interacts with BTBD1 and BTBD2. Interacts with PSMC4, PSMC5, PSMD7 and HSPA8/HSC70. Interacts (via B30.2/SPRY domain) with HSPA1A/B. Interacts with PSMC2, MAP3K7/TAK1, TAB2 and TAB3. Interacts with SQSTM1. Interacts with TRIM6 and TRIM34. Interacts with ULK1 (phosphorylated form), GABARAP, GABARAPL1, GABARAPL2, MAP1LC3A, MAP1LC3C and BECN1. In terms of processing, degraded in a proteasome-independent fashion in the absence of viral infection but in a proteasome-dependent fashion following exposure to restriction sensitive virus. Autoubiquitinated in a RING finger- and UBE2D2-dependent manner. Monoubiquitinated by TRIM21. Deubiquitinated by Yersinia YopJ. Ubiquitination may not lead to proteasomal degradation.

It is found in the cytoplasm. It localises to the nucleus. The enzyme catalyses S-ubiquitinyl-[E2 ubiquitin-conjugating enzyme]-L-cysteine + [acceptor protein]-L-lysine = [E2 ubiquitin-conjugating enzyme]-L-cysteine + N(6)-ubiquitinyl-[acceptor protein]-L-lysine.. Its pathway is protein modification; protein ubiquitination. Its function is as follows. Capsid-specific restriction factor that prevents infection from non-host-adapted retroviruses. Blocks viral replication early in the life cycle, after viral entry but before reverse transcription. In addition to acting as a capsid-specific restriction factor, also acts as a pattern recognition receptor that activates innate immune signaling in response to the retroviral capsid lattice. Binding to the viral capsid triggers its E3 ubiquitin ligase activity, and in concert with the heterodimeric ubiquitin conjugating enzyme complex UBE2V1-UBE2N (also known as UBC13-UEV1A complex) generates 'Lys-63'-linked polyubiquitin chains, which in turn are catalysts in the autophosphorylation of the MAP3K7/TAK1 complex (includes TAK1, TAB2, and TAB3). Activation of the MAP3K7/TAK1 complex by autophosphorylation results in the induction and expression of NF-kappa-B and MAPK-responsive inflammatory genes, thereby leading to an innate immune response in the infected cell. Plays a role in regulating autophagy through activation of autophagy regulator BECN1 by causing its dissociation from its inhibitors BCL2 and TAB2. The polypeptide is Tripartite motif-containing protein 5 (TRIM5) (Papio anubis (Olive baboon)).